Reading from the N-terminus, the 169-residue chain is Mitochondrial ATP-independent inner membrane protease subunit 1b (169 aa).

Active-site residues include serine 47 and lysine 91.

It belongs to the peptidase S26 family. IMP1 subfamily. In terms of assembly, heterodimer of 2 subunits, IMP1A/B and IMP12.

The protein resides in the mitochondrion inner membrane. Catalyzes the removal of transit peptides required for the targeting of proteins from the mitochondrial matrix, across the inner membrane, into the inter-membrane space. The polypeptide is Mitochondrial ATP-independent inner membrane protease subunit 1b (Arabidopsis thaliana (Mouse-ear cress)).